Consider the following 584-residue polypeptide: Isopropyl malate synthase htyA (584 aa).

In terms of domain architecture, Pyruvate carboxyltransferase spans 39-317; that stretch reads PIWLSTDLRD…ETGLDFSNLP (279 aa).

It belongs to the alpha-IPM synthase/homocitrate synthase family. LeuA type 2 subfamily.

It catalyses the reaction 3-methyl-2-oxobutanoate + acetyl-CoA + H2O = (2S)-2-isopropylmalate + CoA + H(+). The protein operates within antifungal biosynthesis. Functionally, isopropyl malate synthase; part of the gene cluster that mediates the de novo generation of L-homotyrosine from acetyl-CoA and 4-hydroxyphenyl-pyruvate. L-homotyrosine is a building block of echinocandin B, a fungal lipidated cyclic hexapeptide that acts as an antifungal agent. L-homotyrosine 4-hydroxyphenyl-pyruvate first undergoes an aldol-type condensation by htyA with the C-2 of acetyl-CoA followed by the release of CoA to form 2-(4-hydroxybenzyl)-malate. This is followed by isomerization of 2-(4-hydroxy-benzyl)-malate to 3-(4-hydroxybenzyl)-malate by htyD. Thereafter, 3-(4-hydroxybenzyl)-malate undergoes decarboxylation and oxidation to form 2-oxo-4-(4-hydroxybenzyl)butanoic acid, coupled to reduction of NAD(+) to NADH by htyC. The product then undergoes transamination catalyzed by htyB to form L-homotyrosine. In Aspergillus rugulosus (Emericella rugulosa), this protein is Isopropyl malate synthase htyA.